Consider the following 425-residue polypeptide: Amidase 1 (425 aa).

At Ala2 the chain carries N-acetylalanine. Active-site charge relay system residues include Lys36 and Ser113. The active-site Acyl-ester intermediate is the Ser137.

This sequence belongs to the amidase family. Expressed in cotyledons, leaves and flower buds. Lower levels in roots, stems and siliques.

It is found in the cytoplasm. The protein localises to the nucleus. The protein resides in the nucleoplasm. It catalyses the reaction a monocarboxylic acid amide + H2O = a monocarboxylate + NH4(+). The catalysed reaction is indole-3-acetamide + H2O = (indol-3-yl)acetate + NH4(+). The enzyme catalyses 2-phenylacetamide + H2O = 2-phenylacetate + NH4(+). It carries out the reaction L-asparagine + H2O = L-aspartate + NH4(+). It catalyses the reaction 1-naphthaleneacetamide + H2O = 1-naphthaleneacetate + NH4(+). Its activity is regulated as follows. Inhibited by phenylmethylsulfonyl fluoride (PMSF). Functionally, amidase involved in auxin biosynthesis. Converts indole-3-acetamide to indole-3-acetate. Converts phenyl-2-acetamide (PAM) to phenyl-2-acetate. Substrate preference is PAM &gt; IAM. Can also use L-asparagine and 1-naphtalene-acetamide as substrates, but not indole-3-acetonitrile or indole-3-acetyl-L-aspartic acid. This is Amidase 1 from Arabidopsis thaliana (Mouse-ear cress).